The chain runs to 231 residues: Probable amino-acid ABC transporter permease protein y4tG (231 aa).

6 helical membrane-spanning segments follow: residues 9–29, 32–52, 64–84, 86–106, 161–181, and 196–216; these read TGNGELAFAISILPMLLMGLI, LQAAFLGFFVACVLGMVFAVL, AAVLIEFIRDTPLIAQLFFLY, VLPEYGIIFPAFLTGALALGI, YLVSIMKDVPVLSVVTIVEML, and VPLSMVGGIYLILTIVASALV. The ABC transmembrane type-1 domain maps to 28–217; it reads LITTLQAAFL…LTIVASALVR (190 aa).

The protein belongs to the binding-protein-dependent transport system permease family. HisMQ subfamily.

It is found in the cell inner membrane. In terms of biological role, probably part of the binding-protein-dependent transport system y4tEFGH for an amino acid. Probably responsible for the translocation of the substrate across the membrane. In Sinorhizobium fredii (strain NBRC 101917 / NGR234), this protein is Probable amino-acid ABC transporter permease protein y4tG.